A 488-amino-acid polypeptide reads, in one-letter code: Endoglucanase A (488 aa).

Substrate-binding positions include His-59, 63–64 (WY), Tyr-90, and His-125. Residue Glu-163 is the Proton donor of the active site. Tyr-226 lines the substrate pocket. Catalysis depends on Glu-252, which acts as the Nucleophile. Substrate is bound by residues 258–259 (AT), Trp-286, and 291–293 (KDE). Disordered regions lie at residues 326-362 (ESAS…AWDP) and 388-451 (EPGA…WDPT). Composition is skewed to pro residues over residues 332 to 353 (PSDP…PPSD) and 405 to 416 (PSEPSDPPPPSE). Over residues 417 to 433 (PEPDPGEPDPGEPDPGE) the composition is skewed to acidic residues.

The protein belongs to the glycosyl hydrolase 5 (cellulase A) family.

The enzyme catalyses Endohydrolysis of (1-&gt;4)-beta-D-glucosidic linkages in cellulose, lichenin and cereal beta-D-glucans.. The protein is Endoglucanase A (celA) of Evansella cellulosilytica (strain ATCC 21833 / DSM 2522 / FERM P-1141 / JCM 9156 / N-4) (Bacillus cellulosilyticus).